A 447-amino-acid polypeptide reads, in one-letter code: N-succinylarginine dihydrolase (447 aa).

Substrate-binding positions include 19-28, asparagine 110, and 137-138; these read AGLSFGNEAS and HR. Glutamate 174 is a catalytic residue. Residue arginine 212 participates in substrate binding. Histidine 248 is an active-site residue. 2 residues coordinate substrate: aspartate 250 and asparagine 359. Residue cysteine 365 is the Nucleophile of the active site.

Belongs to the succinylarginine dihydrolase family. In terms of assembly, homodimer.

It carries out the reaction N(2)-succinyl-L-arginine + 2 H2O + 2 H(+) = N(2)-succinyl-L-ornithine + 2 NH4(+) + CO2. Its pathway is amino-acid degradation; L-arginine degradation via AST pathway; L-glutamate and succinate from L-arginine: step 2/5. Functionally, catalyzes the hydrolysis of N(2)-succinylarginine into N(2)-succinylornithine, ammonia and CO(2). In Escherichia coli O17:K52:H18 (strain UMN026 / ExPEC), this protein is N-succinylarginine dihydrolase.